The following is a 186-amino-acid chain: Elongation factor P (186 aa).

Belongs to the elongation factor P family.

Its subcellular location is the cytoplasm. Its pathway is protein biosynthesis; polypeptide chain elongation. Involved in peptide bond synthesis. Stimulates efficient translation and peptide-bond synthesis on native or reconstituted 70S ribosomes in vitro. Probably functions indirectly by altering the affinity of the ribosome for aminoacyl-tRNA, thus increasing their reactivity as acceptors for peptidyl transferase. The protein is Elongation factor P of Ruminiclostridium cellulolyticum (strain ATCC 35319 / DSM 5812 / JCM 6584 / H10) (Clostridium cellulolyticum).